A 525-amino-acid chain; its full sequence is Serine/threonine protein phosphatase 2A 55 kDa regulatory subunit B beta isoform (525 aa).

Residues 1–31 are disordered; that stretch reads MDPFSKSPDDDDLRPEAEAARRPQPQPQPRE. WD repeat units follow at residues 48 to 87 and 124 to 165; these read QEVD…DSAS and EIEE…VKRI. A disordered region spans residues 169–191; sequence NLNTSQSSGNGTTSSSSSSSSRA. Residues 171 to 189 are compositionally biased toward low complexity; sequence NTSQSSGNGTTSSSSSSSS. 4 WD repeats span residues 244-282, 293-333, 352-390, and 495-525; these read AHDY…QSFN, DLTE…LCDN, EIIA…GPVA, and DLST…MYYA.

The protein belongs to the phosphatase 2A regulatory subunit B family. In terms of assembly, PP2A consists of a common heteromeric enzyme, composed of a catalytic subunit (subunits C), a constant regulatory subunit (subunit A), and a variety of regulatory subunits such as subunits B (the R2/B/PR55/B55, R3/B''/PR72/PR130/PR59 and R5/B'/B56 families).

In terms of biological role, the B regulatory subunit may modulate substrate selectivity and catalytic activity, and may also direct the localization of the catalytic enzyme to a particular subcellular compartment. The protein is Serine/threonine protein phosphatase 2A 55 kDa regulatory subunit B beta isoform of Oryza sativa subsp. indica (Rice).